The primary structure comprises 875 residues: Probable ATP-dependent RNA helicase DDX10 (875 aa).

Residues 1-43 are disordered; that stretch reads MGKTANSPGSGARPDPVRSFNRWKKKHSHRQNKKKQLRKQLKK. A Phosphothreonine modification is found at Thr4. Ser7 bears the Phosphoserine mark. Positions 21 to 41 are enriched in basic residues; sequence NRWKKKHSHRQNKKKQLRKQL. Residues 69-97 carry the Q motif motif; sequence TRFSDFPLSKKTLKGLQEAQYRLVTEIQK. Residues 89 to 91, Gln96, and 113 to 120 contribute to the ATP site; these read YRL and AKTGSGKT. Residues 100-274 enclose the Helicase ATP-binding domain; sequence IGLALQGKDV…RLSLKNPEYV (175 aa). The DEAD box signature appears at 222-225; the sequence is DEAD. The Helicase C-terminal domain maps to 287–448; that stretch reads TLEQNYIVCE…EIKINPEKLI (162 aa). Ser539 carries the phosphoserine modification. An N6-acetyllysine modification is found at Lys555. The disordered stretch occupies residues 562 to 631; sequence GGKRLEGTEH…QFLDRDEEEE (70 aa). Over residues 564-575 the composition is skewed to basic and acidic residues; sequence KRLEGTEHRQDN. Position 577 is a phosphothreonine (Thr577). The segment covering 577-593 has biased composition (acidic residues); that stretch reads TGNEEQEEEEDDEEEME. Polar residues predominate over residues 603–613; the sequence is QAPSLPNTSEA. Residue Lys649 forms a Glycyl lysine isopeptide (Lys-Gly) (interchain with G-Cter in SUMO2) linkage. The tract at residues 703–850 is disordered; that stretch reads MQKSAIKDAE…HNRKKARWDT (148 aa). Positions 727-741 are enriched in basic and acidic residues; that stretch reads ERLQEEDKFDKEEYR. Positions 742–751 are enriched in basic residues; that stretch reads KKIKAKHREK. The segment covering 752–771 has biased composition (basic and acidic residues); it reads RLKEREARREANKRQAKAKD. Positions 772–790 are enriched in acidic residues; the sequence is EEEAFLDWSDDDDDDDDGF. Ser780 carries the post-translational modification Phosphoserine. Basic and acidic residues predominate over residues 812–821; the sequence is MENKISDTKK. Ser831 is subject to Phosphoserine.

The protein belongs to the DEAD box helicase family. DDX10/DBP4 subfamily. Interacts with AIM2; this interaction promotes AIM2 stability. Interacts with SCNA; this interaction causes DDX10 mislocalization to the nucleoplasm and cytoplasmic inclusions. In terms of tissue distribution, high in testis but widely expressed.

It is found in the cytoplasm. The protein resides in the nucleus. Its subcellular location is the nucleolus. It catalyses the reaction ATP + H2O = ADP + phosphate + H(+). Putative ATP-dependent RNA helicase that plays various role in innate immunity or inflammation. Plays a role in the enhancement of AIM2-induced inflammasome activation by interacting with AIM2 and stabilizing its protein level. Negatively regulates viral infection by promoting interferon beta production and interferon stimulated genes/ISGs expression. In Homo sapiens (Human), this protein is Probable ATP-dependent RNA helicase DDX10 (DDX10).